The primary structure comprises 117 residues: QSVKESEGGLFKPTDTLTLTCTVSGFSLSGYDMSWVRQAPGKGLEWIGVIYASGSTYYATWAKSRSTITRTSBTVBLMDSLTAQDTATYFCARGHTGLSYLKSSVDVWGPGTLVTVS.

Residue Q1 is modified to Pyrrolidone carboxylic acid. In terms of domain architecture, Ig-like spans 1-106; it reads QSVKESEGGL…GLSYLKSSVD (106 aa). A disulfide bond links C21 and C91.

The sequence is that of Ig heavy chain V-A2 region K-25 from Oryctolagus cuniculus (Rabbit).